We begin with the raw amino-acid sequence, 139 residues long: D-ribose pyranase (139 aa).

Residue histidine 20 is the Proton donor of the active site. Residues aspartate 28, histidine 106, and 128 to 130 (YAN) each bind substrate.

This sequence belongs to the RbsD / FucU family. RbsD subfamily. Homodecamer.

It is found in the cytoplasm. The enzyme catalyses beta-D-ribopyranose = beta-D-ribofuranose. The protein operates within carbohydrate metabolism; D-ribose degradation; D-ribose 5-phosphate from beta-D-ribopyranose: step 1/2. Functionally, catalyzes the interconversion of beta-pyran and beta-furan forms of D-ribose. The protein is D-ribose pyranase of Citrobacter koseri (strain ATCC BAA-895 / CDC 4225-83 / SGSC4696).